Here is a 259-residue protein sequence, read N- to C-terminus: DNA adenine methylase (259 aa).

The S-adenosyl-L-methionine site is built by Y7, K11, D50, and D171.

It belongs to the N(4)/N(6)-methyltransferase family. In terms of assembly, monomer.

The enzyme catalyses a 2'-deoxyadenosine in DNA + S-adenosyl-L-methionine = an N(6)-methyl-2'-deoxyadenosine in DNA + S-adenosyl-L-homocysteine + H(+). Its function is as follows. An alpha subtpe methyltransferase that recognizes the double-stranded sequence 5'-GATC-3' and methylates A-2 on both strands. May prevent degradation of viral DNA by the host restriction-modification antiviral defense system. This Enterobacteria phage T2 (Bacteriophage T2) protein is DNA adenine methylase.